The following is a 519-amino-acid chain: Cytochrome P450 52A10 (519 aa).

Residue cysteine 466 coordinates heme.

This sequence belongs to the cytochrome P450 family. Heme is required as a cofactor.

It is found in the membrane. In terms of biological role, together with an NADPH cytochrome P450 the enzyme system catalyzes the terminal hydroxylation as the first step in the assimilation of alkanes and fatty acids. This Candida maltosa (Yeast) protein is Cytochrome P450 52A10 (CYP52A10).